The sequence spans 140 residues: UPF0179 protein Msp_0996 (140 aa).

The protein belongs to the UPF0179 family.

The chain is UPF0179 protein Msp_0996 from Methanosphaera stadtmanae (strain ATCC 43021 / DSM 3091 / JCM 11832 / MCB-3).